The chain runs to 311 residues: 4-hydroxy-tetrahydrodipicolinate synthase (311 aa).

Residue threonine 49 participates in pyruvate binding. Residue tyrosine 138 is the Proton donor/acceptor of the active site. The active-site Schiff-base intermediate with substrate is lysine 166. Residue isoleucine 207 participates in pyruvate binding.

Belongs to the DapA family. Homotetramer; dimer of dimers.

The protein localises to the cytoplasm. It carries out the reaction L-aspartate 4-semialdehyde + pyruvate = (2S,4S)-4-hydroxy-2,3,4,5-tetrahydrodipicolinate + H2O + H(+). It functions in the pathway amino-acid biosynthesis; L-lysine biosynthesis via DAP pathway; (S)-tetrahydrodipicolinate from L-aspartate: step 3/4. Functionally, catalyzes the condensation of (S)-aspartate-beta-semialdehyde [(S)-ASA] and pyruvate to 4-hydroxy-tetrahydrodipicolinate (HTPA). This chain is 4-hydroxy-tetrahydrodipicolinate synthase, found in Limosilactobacillus fermentum (strain NBRC 3956 / LMG 18251) (Lactobacillus fermentum).